Reading from the N-terminus, the 240-residue chain is UDP-2,3-diacylglucosamine hydrolase (240 aa).

Residues D8, H10, D41, N79, and H114 each contribute to the Mn(2+) site. 79 to 80 (NR) provides a ligand contact to substrate. 5 residues coordinate substrate: D122, S160, N164, K167, and H195. Mn(2+) is bound by residues H195 and H197.

Belongs to the LpxH family. The cofactor is Mn(2+).

The protein resides in the cell inner membrane. It carries out the reaction UDP-2-N,3-O-bis[(3R)-3-hydroxytetradecanoyl]-alpha-D-glucosamine + H2O = 2-N,3-O-bis[(3R)-3-hydroxytetradecanoyl]-alpha-D-glucosaminyl 1-phosphate + UMP + 2 H(+). It functions in the pathway glycolipid biosynthesis; lipid IV(A) biosynthesis; lipid IV(A) from (3R)-3-hydroxytetradecanoyl-[acyl-carrier-protein] and UDP-N-acetyl-alpha-D-glucosamine: step 4/6. In terms of biological role, hydrolyzes the pyrophosphate bond of UDP-2,3-diacylglucosamine to yield 2,3-diacylglucosamine 1-phosphate (lipid X) and UMP by catalyzing the attack of water at the alpha-P atom. Involved in the biosynthesis of lipid A, a phosphorylated glycolipid that anchors the lipopolysaccharide to the outer membrane of the cell. The chain is UDP-2,3-diacylglucosamine hydrolase from Escherichia coli O157:H7.